The sequence spans 658 residues: Interferon-induced GTP-binding protein Mx1 (658 aa).

Met-1 carries the post-translational modification N-acetylmethionine. Residues 1–20 (MVNSKGKITDSDPGSSHLLL) form a disordered region. One can recognise a Dynamin-type G domain in the interval 65 to 338 (DLALPAIAVI…LITHICKTLP (274 aa)). Residues 75 to 82 (GDQSSGKS) form a G1 motif region. Residue 75–82 (GDQSSGKS) participates in GTP binding. Positions 100–102 (VTR) are G2 motif. The G3 motif stretch occupies residues 176–179 (DLPG). Residues 176 to 180 (DLPGI) and 245 to 248 (TKPD) each bind GTP. The tract at residues 245 to 248 (TKPD) is G4 motif. The tract at residues 277-280 (KCRG) is G5 motif. Positions 339-364 (LLENQIKENYEKITEELQKYGSDVPE) are bundle signaling element (BSE). Positions 364 to 531 (EEEHEKMFFL…HFQMEQIVYC (168 aa)) are middle domain. The segment at 365 to 628 (EEHEKMFFLI…KDTHNWLLKE (264 aa)) is stalk. The critical for lipid-binding stretch occupies residues 551-554 (KDRK). The region spanning 570–658 (LSDIFEHLLA…ARRRLAKFPG (89 aa)) is the GED domain.

The protein belongs to the TRAFAC class dynamin-like GTPase superfamily. Dynamin/Fzo/YdjA family. In terms of assembly, homooligomer. Oligomerizes into multimeric filamentous or ring-like structures by virtue of its stalk domain. Oligomerization is critical for GTPase activity, protein stability, and recognition of viral target structures. Interacts with TRPC1, TRPC3, TRPC4, TRPC5, TRPC6 and TRPC7. Interacts with HSPA5. Interacts with TUBB/TUBB5. Interacts with DDX39A and DDX39B. In terms of processing, ISGylated.

The protein localises to the cytoplasm. It localises to the endoplasmic reticulum membrane. It is found in the perinuclear region. In terms of biological role, interferon-induced dynamin-like GTPase with antiviral activity. The polypeptide is Interferon-induced GTP-binding protein Mx1 (MX1) (Eumetopias jubatus (Steller sea lion)).